The sequence spans 412 residues: Tyrosine--tRNA ligase (412 aa).

Tyr-41 contacts L-tyrosine. The 'HIGH' region signature appears at Ala-46 to His-55. L-tyrosine-binding residues include Tyr-174 and Gln-178. The 'KMSKS' region motif lies at Lys-234–Ser-238. Residue Lys-237 participates in ATP binding. Residues Leu-348–Glu-411 form the S4 RNA-binding domain.

Belongs to the class-I aminoacyl-tRNA synthetase family. TyrS type 1 subfamily. As to quaternary structure, homodimer.

It is found in the cytoplasm. It catalyses the reaction tRNA(Tyr) + L-tyrosine + ATP = L-tyrosyl-tRNA(Tyr) + AMP + diphosphate + H(+). Catalyzes the attachment of tyrosine to tRNA(Tyr) in a two-step reaction: tyrosine is first activated by ATP to form Tyr-AMP and then transferred to the acceptor end of tRNA(Tyr). This is Tyrosine--tRNA ligase from Pseudomonas aeruginosa (strain LESB58).